Here is a 207-residue protein sequence, read N- to C-terminus: Imidazole glycerol phosphate synthase subunit HisH (207 aa).

The Glutamine amidotransferase type-1 domain maps to 1–207 (MIAIVDYNMG…ENFTKYRNLK (207 aa)). Cysteine 79 functions as the Nucleophile in the catalytic mechanism. Catalysis depends on residues histidine 185 and glutamate 187.

Heterodimer of HisH and HisF.

Its subcellular location is the cytoplasm. It catalyses the reaction 5-[(5-phospho-1-deoxy-D-ribulos-1-ylimino)methylamino]-1-(5-phospho-beta-D-ribosyl)imidazole-4-carboxamide + L-glutamine = D-erythro-1-(imidazol-4-yl)glycerol 3-phosphate + 5-amino-1-(5-phospho-beta-D-ribosyl)imidazole-4-carboxamide + L-glutamate + H(+). The catalysed reaction is L-glutamine + H2O = L-glutamate + NH4(+). Its pathway is amino-acid biosynthesis; L-histidine biosynthesis; L-histidine from 5-phospho-alpha-D-ribose 1-diphosphate: step 5/9. Its function is as follows. IGPS catalyzes the conversion of PRFAR and glutamine to IGP, AICAR and glutamate. The HisH subunit catalyzes the hydrolysis of glutamine to glutamate and ammonia as part of the synthesis of IGP and AICAR. The resulting ammonia molecule is channeled to the active site of HisF. The protein is Imidazole glycerol phosphate synthase subunit HisH of Sulfurimonas denitrificans (strain ATCC 33889 / DSM 1251) (Thiomicrospira denitrificans (strain ATCC 33889 / DSM 1251)).